The sequence spans 154 residues: Putative pre-16S rRNA nuclease (154 aa).

It belongs to the YqgF nuclease family.

It is found in the cytoplasm. Could be a nuclease involved in processing of the 5'-end of pre-16S rRNA. The sequence is that of Putative pre-16S rRNA nuclease from Rickettsia peacockii (strain Rustic).